A 259-amino-acid chain; its full sequence is UPF0246 protein MADE_1015435 (259 aa).

This sequence belongs to the UPF0246 family.

This Alteromonas mediterranea (strain DSM 17117 / CIP 110805 / LMG 28347 / Deep ecotype) protein is UPF0246 protein MADE_1015435.